Reading from the N-terminus, the 917-residue chain is Lipoxygenase 6, chloroplastic (917 aa).

The transit peptide at 1 to 40 (MFVASPVKTNFNGVSLVKSPAFSALSCRKQHRVPISRQVR) directs the protein to the chloroplast. The span at 46-57 (EEKAVDQEDGKK) shows a compositional bias: basic and acidic residues. The tract at residues 46–66 (EEKAVDQEDGKKSTNKPLINS) is disordered. Residues 98–216 (ERFEHQLELF…DNPQARIIFR (119 aa)) form the PLAT domain. Residues 219–917 (PCLPSETPDG…GRGIPNSISI (699 aa)) enclose the Lipoxygenase domain. Fe cation is bound by residues His-575, His-580, His-767, and Asn-771. A disordered region spans residues 880–904 (KDKKLKNRTGAGMPPYELLLPTSPH). Position 917 (Ile-917) interacts with Fe cation.

This sequence belongs to the lipoxygenase family. Fe cation serves as cofactor.

It localises to the plastid. The protein resides in the chloroplast. It carries out the reaction (9Z,12Z)-octadecadienoate + O2 = (13S)-hydroperoxy-(9Z,11E)-octadecadienoate. It catalyses the reaction (9Z,12Z,15Z)-octadecatrienoate + O2 = (13S)-hydroperoxy-(9Z,11E,15Z)-octadecatrienoate. It functions in the pathway lipid metabolism; oxylipin biosynthesis. In terms of biological role, plant lipoxygenases may be involved in a number of diverse aspects of plant physiology including growth and development, pest resistance, and senescence or responses to wounding. Catalyzes the hydroperoxidation of lipids containing a cis,cis-1,4-pentadiene structure. 13S-lipoxygenase that can use linolenic acid as substrates. The protein is Lipoxygenase 6, chloroplastic of Arabidopsis thaliana (Mouse-ear cress).